The chain runs to 166 residues: Regulatory protein RecX (166 aa).

It belongs to the RecX family.

The protein localises to the cytoplasm. In terms of biological role, modulates RecA activity. This is Regulatory protein RecX from Salmonella paratyphi A (strain ATCC 9150 / SARB42).